The primary structure comprises 1502 residues: Gem-associated protein 5 (1502 aa).

The segment at Met-1 to Leu-124 is important for interaction with U1 snRNA. Positions Asn-13–Tyr-15 are interaction with U4 snRNA. Ser-48 bears the Phosphoserine mark. WD repeat units lie at residues Gly-62–Glu-104, Leu-107–Phe-148, Glu-150–His-189, Gly-193–Val-264, Thr-280–Tyr-321, His-333–Thr-374, Ser-377–Asp-417, Gly-424–Ile-464, Tyr-468–Gln-509, Arg-533–Thr-573, and Gln-576–Pro-622. At Ser-624 the chain carries Phosphoserine. WD repeat units lie at residues Gly-637–Asn-677 and Gly-680–Pro-720. Disordered stretches follow at residues Lys-740 to Val-797 and Ser-819 to Leu-838. Lys-754 is covalently cross-linked (Glycyl lysine isopeptide (Lys-Gly) (interchain with G-Cter in SUMO2)). 3 positions are modified to phosphoserine: Ser-757, Ser-770, and Ser-778. Positions Leu-825 to Leu-838 are enriched in basic and acidic residues. At Ser-845 the chain carries Phosphoserine. Disordered regions lie at residues Val-1309–Glu-1338 and His-1378–Glu-1427. A coiled-coil region spans residues Ala-1355 to Gln-1382. Over residues Lys-1380 to Pro-1391 the composition is skewed to polar residues. Over residues Ser-1392–Arg-1407 the composition is skewed to basic and acidic residues.

This sequence belongs to the WD repeat gemin-5 family. As to quaternary structure, part of the core SMN complex that contains SMN1, GEMIN2/SIP1, DDX20/GEMIN3, GEMIN4, GEMIN5, GEMIN6, GEMIN7, GEMIN8 and STRAP/UNRIP. Part of the SMN-Sm complex that contains SMN1, GEMIN2/SIP1, DDX20/GEMIN3, GEMIN4, GEMIN5, GEMIN6, GEMIN7, GEMIN8, STRAP/UNRIP and the Sm proteins SNRPB, SNRPD1, SNRPD2, SNRPD3, SNRPE, SNRPF and SNRPG. Interacts directly with SMN1, SNRPB, SNRPD1, SNRPD2, SNRPD3 and SNRPE. Identified in a SMN complex that contains GEMIN2/SIP1. Interacts with cytosolic DDX20/GEMIN3 and GEMIN4. Interacts with SNRNP70 and HNRNPU. Identified in a complex with 80S ribosomes; binds to the 60S large ribosomal subunit. Interacts with the ribosomal subunits RPL3 and RPL4.

It is found in the nucleus. It localises to the nucleoplasm. The protein localises to the gem. Its subcellular location is the cytoplasm. In terms of biological role, the SMN complex catalyzes the assembly of small nuclear ribonucleoproteins (snRNPs), the building blocks of the spliceosome, and thereby plays an important role in the splicing of cellular pre-mRNAs. Most spliceosomal snRNPs contain a common set of Sm proteins SNRPB, SNRPD1, SNRPD2, SNRPD3, SNRPE, SNRPF and SNRPG that assemble in a heptameric protein ring on the Sm site of the small nuclear RNA to form the core snRNP (Sm core). In the cytosol, the Sm proteins SNRPD1, SNRPD2, SNRPE, SNRPF and SNRPG are trapped in an inactive 6S pICln-Sm complex by the chaperone CLNS1A that controls the assembly of the core snRNP. To assemble core snRNPs, the SMN complex accepts the trapped 5Sm proteins from CLNS1A forming an intermediate. Binding of snRNA inside 5Sm ultimately triggers eviction of the SMN complex, thereby allowing binding of SNRPD3 and SNRPB to complete assembly of the core snRNP. Within the SMN complex, GEMIN5 recognizes and delivers the small nuclear RNAs (snRNAs) to the SMN complex. Binds to the 7-methylguanosine cap of RNA molecules. Binds to the 3'-UTR of SMN1 mRNA and regulates its translation; does not affect mRNA stability. May play a role in the regulation of protein synthesis via its interaction with ribosomes. This is Gem-associated protein 5 (Gemin5) from Mus musculus (Mouse).